The primary structure comprises 140 residues: Ribosome-binding factor A (140 aa).

Residues 1-13 (MQKKSSSKSHRAT) show a composition bias toward basic residues. The segment at 1–22 (MQKKSSSKSHRATRGPSQRQLR) is disordered.

Belongs to the RbfA family. Monomer. Binds 30S ribosomal subunits, but not 50S ribosomal subunits or 70S ribosomes.

Its subcellular location is the cytoplasm. In terms of biological role, one of several proteins that assist in the late maturation steps of the functional core of the 30S ribosomal subunit. Associates with free 30S ribosomal subunits (but not with 30S subunits that are part of 70S ribosomes or polysomes). Required for efficient processing of 16S rRNA. May interact with the 5'-terminal helix region of 16S rRNA. This is Ribosome-binding factor A from Parvibaculum lavamentivorans (strain DS-1 / DSM 13023 / NCIMB 13966).